Consider the following 417-residue polypeptide: Acetate kinase (417 aa).

Mg(2+) is bound at residue N9. Residue K16 participates in ATP binding. R90 contacts substrate. The active-site Proton donor/acceptor is the D147. ATP-binding positions include 207–211 (HIGNG), 282–284 (DLR), and 330–334 (GIGEN). Position 384 (E384) interacts with Mg(2+).

The protein belongs to the acetokinase family. Homodimer. Requires Mg(2+) as cofactor. Mn(2+) serves as cofactor.

The protein localises to the cytoplasm. The enzyme catalyses acetate + ATP = acetyl phosphate + ADP. The protein operates within metabolic intermediate biosynthesis; acetyl-CoA biosynthesis; acetyl-CoA from acetate: step 1/2. Functionally, catalyzes the formation of acetyl phosphate from acetate and ATP. Can also catalyze the reverse reaction. This is Acetate kinase from Staphylococcus epidermidis (strain ATCC 35984 / DSM 28319 / BCRC 17069 / CCUG 31568 / BM 3577 / RP62A).